We begin with the raw amino-acid sequence, 603 residues long: DNA-directed RNA polymerase subunit beta' N-terminal section (603 aa).

Zn(2+) contacts are provided by Cys-283, Cys-285, Cys-329, and Cys-332.

The protein belongs to the RNA polymerase beta' chain family. RpoC1 subfamily. As to quaternary structure, in plastids the minimal PEP RNA polymerase catalytic core is composed of four subunits: alpha, beta, beta', and beta''. When a (nuclear-encoded) sigma factor is associated with the core the holoenzyme is formed, which can initiate transcription. It depends on Zn(2+) as a cofactor.

Its subcellular location is the plastid. The protein resides in the chloroplast. It carries out the reaction RNA(n) + a ribonucleoside 5'-triphosphate = RNA(n+1) + diphosphate. Functionally, DNA-dependent RNA polymerase catalyzes the transcription of DNA into RNA using the four ribonucleoside triphosphates as substrates. This Chlamydomonas reinhardtii (Chlamydomonas smithii) protein is DNA-directed RNA polymerase subunit beta' N-terminal section (rpoC1A).